A 480-amino-acid chain; its full sequence is Bifunctional protein GlmU (480 aa).

The segment at 1 to 247 (MATPIDVVIM…AAQVAGVNSP (247 aa)) is pyrophosphorylase. Residues K24, Q86, 91 to 92 (GT), 113 to 115 (SGD), G150, E172, and N245 each bind UDP-N-acetyl-alpha-D-glucosamine. D115 lines the Mg(2+) pocket. N245 serves as a coordination point for Mg(2+). The interval 248–268 (VQLAELERVYQLRQATALMEQ) is linker. The N-acetyltransferase stretch occupies residues 269 to 480 (GVRLADPARF…WKRPVKVSKG (212 aa)). 2 residues coordinate UDP-N-acetyl-alpha-D-glucosamine: R355 and K373. H385 acts as the Proton acceptor in catalysis. Y388 and N399 together coordinate UDP-N-acetyl-alpha-D-glucosamine. Acetyl-CoA contacts are provided by residues A402, 408–409 (NY), S427, G445, and R462.

This sequence in the N-terminal section; belongs to the N-acetylglucosamine-1-phosphate uridyltransferase family. It in the C-terminal section; belongs to the transferase hexapeptide repeat family. As to quaternary structure, homotrimer. Mg(2+) serves as cofactor.

Its subcellular location is the cytoplasm. The enzyme catalyses alpha-D-glucosamine 1-phosphate + acetyl-CoA = N-acetyl-alpha-D-glucosamine 1-phosphate + CoA + H(+). The catalysed reaction is N-acetyl-alpha-D-glucosamine 1-phosphate + UTP + H(+) = UDP-N-acetyl-alpha-D-glucosamine + diphosphate. It participates in nucleotide-sugar biosynthesis; UDP-N-acetyl-alpha-D-glucosamine biosynthesis; N-acetyl-alpha-D-glucosamine 1-phosphate from alpha-D-glucosamine 6-phosphate (route II): step 2/2. Its pathway is nucleotide-sugar biosynthesis; UDP-N-acetyl-alpha-D-glucosamine biosynthesis; UDP-N-acetyl-alpha-D-glucosamine from N-acetyl-alpha-D-glucosamine 1-phosphate: step 1/1. The protein operates within bacterial outer membrane biogenesis; LPS lipid A biosynthesis. In terms of biological role, catalyzes the last two sequential reactions in the de novo biosynthetic pathway for UDP-N-acetylglucosamine (UDP-GlcNAc). The C-terminal domain catalyzes the transfer of acetyl group from acetyl coenzyme A to glucosamine-1-phosphate (GlcN-1-P) to produce N-acetylglucosamine-1-phosphate (GlcNAc-1-P), which is converted into UDP-GlcNAc by the transfer of uridine 5-monophosphate (from uridine 5-triphosphate), a reaction catalyzed by the N-terminal domain. This is Bifunctional protein GlmU from Polaromonas sp. (strain JS666 / ATCC BAA-500).